The primary structure comprises 265 residues: Bradykinin-potentiating and C-type natriuretic peptides (265 aa).

A signal peptide spans 1-23 (MVLSRLAASGLLLLALLALSVDG). Positions 24-30 (KPVQQWA) are excised as a propeptide. Glutamine 31 is modified (pyrrolidone carboxylic acid). The propeptide occupies 44–50 (LKVQQWA). The residue at position 51 (glutamine 51) is a Pyrrolidone carboxylic acid. Residues 64–70 (LTVQQWA) constitute a propeptide that is removed on maturation. A Pyrrolidone carboxylic acid modification is found at glutamine 71. A propeptide spanning residues 81–87 (LTVQQWA) is cleaved from the precursor. Pyrrolidone carboxylic acid is present on glutamine 88. Positions 100 to 106 (LEVQQWA) are excised as a propeptide. The residue at position 107 (glutamine 107) is a Pyrrolidone carboxylic acid. A propeptide spanning residues 118–120 (APL) is cleaved from the precursor. Position 121 is a pyrrolidone carboxylic acid (glutamine 121). Residue valine 126 is a propeptide. Position 127 is a pyrrolidone carboxylic acid (glutamine 127). Residues 132–241 (LLQPHESPAS…GGARRLKGLA (110 aa)) constitute a propeptide that is removed on maturation. Residues 153-211 (GPEAASGVPSAGAEVGRSGSKAPAAPHRLSKSKGAAATSAASRPMRDLRPDGKQARQNW) are disordered. The span at 184 to 194 (SKGAAATSAAS) shows a compositional bias: low complexity. A compositionally biased stretch (basic and acidic residues) spans 196–206 (PMRDLRPDGKQ). Cysteine 249 and cysteine 265 are oxidised to a cystine.

This sequence in the N-terminal section; belongs to the bradykinin-potentiating peptide family. The protein in the C-terminal section; belongs to the natriuretic peptide family. As to expression, expressed by the venom gland.

Its subcellular location is the secreted. The protein resides in the cytoplasm. The protein localises to the cytosol. In terms of biological role, modestly inhibits ACE (with highest affinity for the N-site) and reveals strong bradykinin-potentiating activity. Induces nitric oxide (NO) production depended on muscarinic acetylcholine receptor M1 subtype (CHRM1) and bradykinin B2 receptor (BDKRB2) activation. Both these receptors contribute to the vasodilation induced by this peptide that may have an indirect action on BDKRB2 and a direct agonistic action on CHRM1. Its function is as follows. Peptide with several activities. It inhibits the activity of the angiotensin-converting enzyme (ACE) by a preferential interaction with its C-domain. It evokes transient hypotension (-14 mmHg) similar to that evoked by 0.5 ug of bradykinin, when injected alone into rats. It has a high bradykinin-potentiating effect (120%), when 60 nmol of BPP-10c are coinjected with 0.5 ug of bradykinin into rats. Does not affect angiotensin-1 pressor effects. Shows potent and long-lasting antihypertensive activity as well as a reduction of the heart rate. It also binds and dose-dependently promotes the activation of cytosolic argininosuccinate synthase (ASS1), an enzyme that catalyzes the conversion of citrulline, L-aspartate and ATP to argininosuccinate, AMP and pyrophosphate. It also enhances ASS1-dependent arginine production in HEK 293 cells, as well as in spontaneous hypertensive rat (SHR) and Wistar rat plasma. In addition, it induces the production of nitric-oxide (NO) by HUVEC cells via the endothelial nitric-oxide synthase (NOS3), which use arginine as a substrate and produce NO. It has been shown to be internalized by ASS1-expressing endothelial (HUVEC) and kidney (HEK 293) cells, and is detected homogenously distributed within the cell cytoplasm for up to 2 hours. Functionally, has a vasorelaxant activity in rat aortic strips and a diuretic potency in anesthetized rats. May act by activating natriuretic receptors (NPR1 and/or NPR2). This Bothrops insularis (Golden lancehead) protein is Bradykinin-potentiating and C-type natriuretic peptides.